The following is a 165-amino-acid chain: UPF0669 protein v1g209471 (165 aa).

A signal peptide spans 1 to 23 (MQGRYSAPLFLLLWLFFLHGTLC). Asn38 carries an N-linked (GlcNAc...) asparagine glycan.

This sequence belongs to the UPF0669 family.

It localises to the secreted. This is UPF0669 protein v1g209471 from Nematostella vectensis (Starlet sea anemone).